The chain runs to 150 residues: SsrA-binding protein (150 aa).

The protein belongs to the SmpB family.

The protein localises to the cytoplasm. Its function is as follows. Required for rescue of stalled ribosomes mediated by trans-translation. Binds to transfer-messenger RNA (tmRNA), required for stable association of tmRNA with ribosomes. tmRNA and SmpB together mimic tRNA shape, replacing the anticodon stem-loop with SmpB. tmRNA is encoded by the ssrA gene; the 2 termini fold to resemble tRNA(Ala) and it encodes a 'tag peptide', a short internal open reading frame. During trans-translation Ala-aminoacylated tmRNA acts like a tRNA, entering the A-site of stalled ribosomes, displacing the stalled mRNA. The ribosome then switches to translate the ORF on the tmRNA; the nascent peptide is terminated with the 'tag peptide' encoded by the tmRNA and targeted for degradation. The ribosome is freed to recommence translation, which seems to be the essential function of trans-translation. The chain is SsrA-binding protein from Campylobacter jejuni (strain RM1221).